The sequence spans 259 residues: Cobalt-precorrin-4 C(11)-methyltransferase (259 aa).

It belongs to the precorrin methyltransferase family.

It carries out the reaction Co-precorrin-4 + S-adenosyl-L-methionine = Co-precorrin-5A + S-adenosyl-L-homocysteine + H(+). It participates in cofactor biosynthesis; adenosylcobalamin biosynthesis; cob(II)yrinate a,c-diamide from sirohydrochlorin (anaerobic route): step 4/10. Catalyzes the methylation of C-11 in cobalt-precorrin-4 to form cobalt-precorrin-5A. In Methanocaldococcus jannaschii (strain ATCC 43067 / DSM 2661 / JAL-1 / JCM 10045 / NBRC 100440) (Methanococcus jannaschii), this protein is Cobalt-precorrin-4 C(11)-methyltransferase (cbiF).